The following is a 291-amino-acid chain: Bis(5'-nucleosyl)-tetraphosphatase, symmetrical (291 aa).

The protein belongs to the Ap4A hydrolase family.

It catalyses the reaction P(1),P(4)-bis(5'-adenosyl) tetraphosphate + H2O = 2 ADP + 2 H(+). Its function is as follows. Hydrolyzes diadenosine 5',5'''-P1,P4-tetraphosphate to yield ADP. This chain is Bis(5'-nucleosyl)-tetraphosphatase, symmetrical, found in Coxiella burnetii (strain CbuK_Q154) (Coxiella burnetii (strain Q154)).